A 249-amino-acid polypeptide reads, in one-letter code: 2,3-bisphosphoglycerate-dependent phosphoglycerate mutase (249 aa).

Residues 9-16 (RHGQSQWN), 22-23 (TG), Arg-61, 88-91 (ERHY), Lys-99, 115-116 (RR), and 184-185 (GN) each bind substrate. The active-site Tele-phosphohistidine intermediate is His-10. Glu-88 serves as the catalytic Proton donor/acceptor.

The protein belongs to the phosphoglycerate mutase family. BPG-dependent PGAM subfamily. In terms of assembly, homodimer.

The catalysed reaction is (2R)-2-phosphoglycerate = (2R)-3-phosphoglycerate. It participates in carbohydrate degradation; glycolysis; pyruvate from D-glyceraldehyde 3-phosphate: step 3/5. Catalyzes the interconversion of 2-phosphoglycerate and 3-phosphoglycerate. The sequence is that of 2,3-bisphosphoglycerate-dependent phosphoglycerate mutase from Xanthomonas campestris pv. campestris (strain B100).